The sequence spans 136 residues: Large ribosomal subunit protein uL16c (136 aa).

It belongs to the universal ribosomal protein uL16 family. In terms of assembly, part of the 50S ribosomal subunit.

It is found in the plastid. The protein localises to the chloroplast. The polypeptide is Large ribosomal subunit protein uL16c (Illicium oligandrum (Star anise)).